Here is a 142-residue protein sequence, read N- to C-terminus: Large ribosomal subunit protein uL11 (142 aa).

It belongs to the universal ribosomal protein uL11 family. Part of the ribosomal stalk of the 50S ribosomal subunit. Interacts with L10 and the large rRNA to form the base of the stalk. L10 forms an elongated spine to which L12 dimers bind in a sequential fashion forming a multimeric L10(L12)X complex. Post-translationally, one or more lysine residues are methylated.

Forms part of the ribosomal stalk which helps the ribosome interact with GTP-bound translation factors. In Bartonella henselae (strain ATCC 49882 / DSM 28221 / CCUG 30454 / Houston 1) (Rochalimaea henselae), this protein is Large ribosomal subunit protein uL11.